The chain runs to 138 residues: Large ribosomal subunit protein uL16m (138 aa).

The protein belongs to the universal ribosomal protein uL16 family.

Its subcellular location is the mitochondrion. The protein is Large ribosomal subunit protein uL16m (RPL16) of Chondrus crispus (Carrageen Irish moss).